The following is a 208-amino-acid chain: Ribosome maturation factor RimP (208 aa).

The disordered stretch occupies residues 165-208; the sequence is TAQPKKGQRQGKEPAKESGQKKQLAEAAPRSGSKRSERGSEKRK. Composition is skewed to basic and acidic residues over residues 174-188 and 198-208; these read QGKE…KKQL and KRSERGSEKRK.

The protein belongs to the RimP family.

It localises to the cytoplasm. Its function is as follows. Required for maturation of 30S ribosomal subunits. In Sorangium cellulosum (strain So ce56) (Polyangium cellulosum (strain So ce56)), this protein is Ribosome maturation factor RimP.